The following is a 180-amino-acid chain: Pro-glucagon (180 aa).

Residues 1–20 (MKNIYIVAGFFVVLVQGSWQ) form the signal peptide. The tract at residues 25–59 (DTEEKSRSFPASQTDPLEDPDQINEDKRHSQGTFT) is disordered. Residue S54 is modified to Phosphoserine. Positions 84 to 89 (NRNNIA) are excised as a propeptide. Residues S105 and S108 each carry the phosphoserine modification. Residue R127 is modified to Arginine amide. Positions 131–145 (DFPEEVTIVEELGRR) are excised as a propeptide. Phosphoserine occurs at positions 150 and 152.

It belongs to the glucagon family. In terms of processing, proglucagon is post-translationally processed in a tissue-specific manner in pancreatic A cells and intestinal L cells. In pancreatic A cells, the major bioactive hormone is glucagon cleaved by PCSK2/PC2. In the intestinal L cells PCSK1/PC1 liberates GLP-1, GLP-2, glicentin and oxyntomodulin. GLP-1 is further N-terminally truncated by post-translational processing in the intestinal L cells resulting in GLP-1(7-37) GLP-1-(7-36)amide. The C-terminal amidation is neither important for the metabolism of GLP-1 nor for its effects on the endocrine pancreas.

The protein resides in the secreted. In terms of biological role, plays a key role in glucose metabolism and homeostasis. Regulates blood glucose by increasing gluconeogenesis and decreasing glycolysis. A counterregulatory hormone of insulin, raises plasma glucose levels in response to insulin-induced hypoglycemia. Plays an important role in initiating and maintaining hyperglycemic conditions in diabetes. Its function is as follows. Potent stimulator of glucose-dependent insulin release. Also stimulates insulin release in response to IL6. Plays important roles on gastric motility and the suppression of plasma glucagon levels. May be involved in the suppression of satiety and stimulation of glucose disposal in peripheral tissues, independent of the actions of insulin. Has growth-promoting activities on intestinal epithelium. May also regulate the hypothalamic pituitary axis (HPA) via effects on LH, TSH, CRH, oxytocin, and vasopressin secretion. Increases islet mass through stimulation of islet neogenesis and pancreatic beta cell proliferation. Inhibits beta cell apoptosis. Functionally, stimulates intestinal growth and up-regulates villus height in the small intestine, concomitant with increased crypt cell proliferation and decreased enterocyte apoptosis. The gastrointestinal tract, from the stomach to the colon is the principal target for GLP-2 action. Plays a key role in nutrient homeostasis, enhancing nutrient assimilation through enhanced gastrointestinal function, as well as increasing nutrient disposal. Stimulates intestinal glucose transport and decreases mucosal permeability. Significantly reduces food intake. Inhibits gastric emptying in humans. Suppression of gastric emptying may lead to increased gastric distension, which may contribute to satiety by causing a sensation of fullness. In terms of biological role, may modulate gastric acid secretion and the gastro-pyloro-duodenal activity. May play an important role in intestinal mucosal growth in the early period of life. This Mesocricetus auratus (Golden hamster) protein is Pro-glucagon (GCG).